The primary structure comprises 180 residues: Crossover junction endodeoxyribonuclease RuvC (180 aa).

Catalysis depends on residues Asp-7, Glu-66, and Asp-138. Mg(2+) is bound by residues Asp-7, Glu-66, and Asp-138.

Belongs to the RuvC family. As to quaternary structure, homodimer which binds Holliday junction (HJ) DNA. The HJ becomes 2-fold symmetrical on binding to RuvC with unstacked arms; it has a different conformation from HJ DNA in complex with RuvA. In the full resolvosome a probable DNA-RuvA(4)-RuvB(12)-RuvC(2) complex forms which resolves the HJ. It depends on Mg(2+) as a cofactor.

The protein resides in the cytoplasm. The catalysed reaction is Endonucleolytic cleavage at a junction such as a reciprocal single-stranded crossover between two homologous DNA duplexes (Holliday junction).. Functionally, the RuvA-RuvB-RuvC complex processes Holliday junction (HJ) DNA during genetic recombination and DNA repair. Endonuclease that resolves HJ intermediates. Cleaves cruciform DNA by making single-stranded nicks across the HJ at symmetrical positions within the homologous arms, yielding a 5'-phosphate and a 3'-hydroxyl group; requires a central core of homology in the junction. The consensus cleavage sequence is 5'-(A/T)TT(C/G)-3'. Cleavage occurs on the 3'-side of the TT dinucleotide at the point of strand exchange. HJ branch migration catalyzed by RuvA-RuvB allows RuvC to scan DNA until it finds its consensus sequence, where it cleaves and resolves the cruciform DNA. The sequence is that of Crossover junction endodeoxyribonuclease RuvC from Burkholderia orbicola (strain MC0-3).